Reading from the N-terminus, the 513-residue chain is Maturase K (513 aa).

The protein belongs to the intron maturase 2 family. MatK subfamily.

Its subcellular location is the plastid. The protein localises to the chloroplast. Functionally, usually encoded in the trnK tRNA gene intron. Probably assists in splicing its own and other chloroplast group II introns. The protein is Maturase K of Typha latifolia (Bulrush).